A 187-amino-acid polypeptide reads, in one-letter code: Ribosome-recycling factor (187 aa).

It belongs to the RRF family.

The protein resides in the cytoplasm. In terms of biological role, responsible for the release of ribosomes from messenger RNA at the termination of protein biosynthesis. May increase the efficiency of translation by recycling ribosomes from one round of translation to another. The sequence is that of Ribosome-recycling factor from Bradyrhizobium sp. (strain BTAi1 / ATCC BAA-1182).